Consider the following 331-residue polypeptide: Biotin synthase (331 aa).

The Radical SAM core domain occupies 52–277; sequence PEVEVEGIVS…RTILRYAGGR (226 aa). [4Fe-4S] cluster-binding residues include C67, C71, and C74. [2Fe-2S] cluster-binding residues include C110, C202, and R272.

The protein belongs to the radical SAM superfamily. Biotin synthase family. As to quaternary structure, homodimer. The cofactor is [4Fe-4S] cluster. [2Fe-2S] cluster serves as cofactor.

The catalysed reaction is (4R,5S)-dethiobiotin + (sulfur carrier)-SH + 2 reduced [2Fe-2S]-[ferredoxin] + 2 S-adenosyl-L-methionine = (sulfur carrier)-H + biotin + 2 5'-deoxyadenosine + 2 L-methionine + 2 oxidized [2Fe-2S]-[ferredoxin]. The protein operates within cofactor biosynthesis; biotin biosynthesis; biotin from 7,8-diaminononanoate: step 2/2. Catalyzes the conversion of dethiobiotin (DTB) to biotin by the insertion of a sulfur atom into dethiobiotin via a radical-based mechanism. This is Biotin synthase from Salinispora tropica (strain ATCC BAA-916 / DSM 44818 / JCM 13857 / NBRC 105044 / CNB-440).